The sequence spans 155 residues: Phosphopantetheine adenylyltransferase (155 aa).

This sequence belongs to the eukaryotic CoaD family.

The protein resides in the cytoplasm. It carries out the reaction (R)-4'-phosphopantetheine + ATP + H(+) = 3'-dephospho-CoA + diphosphate. Its pathway is cofactor biosynthesis; coenzyme A biosynthesis. In terms of biological role, reversibly transfers an adenylyl group from ATP to 4'-phosphopantetheine, yielding dephospho-CoA (dPCoA) and pyrophosphate. This is Phosphopantetheine adenylyltransferase from Pyrobaculum aerophilum (strain ATCC 51768 / DSM 7523 / JCM 9630 / CIP 104966 / NBRC 100827 / IM2).